The following is a 74-amino-acid chain: MKKITPKSFEEALSRLESLTQSMQGEMPLEDALAAYQEGNELVRYCQTKLAQVEQKLQVLDADGPKELNLESDE.

It belongs to the XseB family. As to quaternary structure, heterooligomer composed of large and small subunits.

It is found in the cytoplasm. It catalyses the reaction Exonucleolytic cleavage in either 5'- to 3'- or 3'- to 5'-direction to yield nucleoside 5'-phosphates.. In terms of biological role, bidirectionally degrades single-stranded DNA into large acid-insoluble oligonucleotides, which are then degraded further into small acid-soluble oligonucleotides. In Neisseria meningitidis serogroup C / serotype 2a (strain ATCC 700532 / DSM 15464 / FAM18), this protein is Exodeoxyribonuclease 7 small subunit.